The chain runs to 40 residues: Protamine-1 (40 aa).

Residues 1-40 (MPPRRKRVSSAPRRRRRTYRRTTAHKHQDRPVHRRRRRRH) are disordered.

In terms of tissue distribution, testis.

It is found in the nucleus. The protein localises to the chromosome. Functionally, protamines substitute for histones in the chromatin of sperm during the haploid phase of spermatogenesis. They compact sperm DNA into a highly condensed, stable and inactive complex. In Bufo japonicus (Japanese common toad), this protein is Protamine-1 (PBP1).